Here is a 199-residue protein sequence, read N- to C-terminus: Dephospho-CoA kinase (199 aa).

Residues 2–199 enclose the DPCK domain; it reads KIAVTGGYSS…FVADRIEKKK (198 aa). 10 to 15 contacts ATP; it reads SSGKSS.

This sequence belongs to the CoaE family.

It localises to the cytoplasm. The enzyme catalyses 3'-dephospho-CoA + ATP = ADP + CoA + H(+). Its pathway is cofactor biosynthesis; coenzyme A biosynthesis; CoA from (R)-pantothenate: step 5/5. Its function is as follows. Catalyzes the phosphorylation of the 3'-hydroxyl group of dephosphocoenzyme A to form coenzyme A. The polypeptide is Dephospho-CoA kinase (Desulfotalea psychrophila (strain LSv54 / DSM 12343)).